We begin with the raw amino-acid sequence, 168 residues long: Large ribosomal subunit protein uL10 (168 aa).

This sequence belongs to the universal ribosomal protein uL10 family. Part of the ribosomal stalk of the 50S ribosomal subunit. The N-terminus interacts with L11 and the large rRNA to form the base of the stalk. The C-terminus forms an elongated spine to which L12 dimers bind in a sequential fashion forming a multimeric L10(L12)X complex.

Its function is as follows. Forms part of the ribosomal stalk, playing a central role in the interaction of the ribosome with GTP-bound translation factors. This is Large ribosomal subunit protein uL10 from Lacticaseibacillus casei (strain BL23) (Lactobacillus casei).